We begin with the raw amino-acid sequence, 459 residues long: Ribulose bisphosphate carboxylase (459 aa).

Asparagine 111 serves as a coordination point for substrate. Lysine 166 (proton acceptor) is an active-site residue. Substrate is bound at residue lysine 168. Residues lysine 191, aspartate 193, and glutamate 194 each coordinate Mg(2+). Lysine 191 bears the N6-carboxylysine mark. Histidine 287 (proton acceptor) is an active-site residue. Residues arginine 288, histidine 321, and serine 368 each contribute to the substrate site.

Belongs to the RuBisCO large chain family. Type II subfamily. In terms of assembly, homodimer. Requires Mg(2+) as cofactor.

The catalysed reaction is 2 (2R)-3-phosphoglycerate + 2 H(+) = D-ribulose 1,5-bisphosphate + CO2 + H2O. It catalyses the reaction D-ribulose 1,5-bisphosphate + O2 = 2-phosphoglycolate + (2R)-3-phosphoglycerate + 2 H(+). Its function is as follows. RuBisCO catalyzes two reactions: the carboxylation of D-ribulose 1,5-bisphosphate, the primary event in carbon dioxide fixation, as well as the oxidative fragmentation of the pentose substrate. Both reactions occur simultaneously and in competition at the same active site. This is Ribulose bisphosphate carboxylase from Paramagnetospirillum magnetotacticum (Aquaspirillum magnetotacticum).